A 349-amino-acid polypeptide reads, in one-letter code: NADH-quinone oxidoreductase subunit H (349 aa).

The next 8 membrane-spanning stretches (helical) occupy residues 14–34 (LLVW…GCVA), 85–105 (GLFL…WAVI), 120–140 (LLYI…AGWA), 164–184 (MGFA…VDIV), 196–216 (ILSW…ISGV), 243–263 (GMAF…VAAL), 285–305 (AGGF…FLWF), and 324–344 (VFIP…FSPL).

Belongs to the complex I subunit 1 family. In terms of assembly, NDH-1 is composed of 14 different subunits. Subunits NuoA, H, J, K, L, M, N constitute the membrane sector of the complex.

Its subcellular location is the cell inner membrane. The enzyme catalyses a quinone + NADH + 5 H(+)(in) = a quinol + NAD(+) + 4 H(+)(out). Its function is as follows. NDH-1 shuttles electrons from NADH, via FMN and iron-sulfur (Fe-S) centers, to quinones in the respiratory chain. The immediate electron acceptor for the enzyme in this species is believed to be ubiquinone. Couples the redox reaction to proton translocation (for every two electrons transferred, four hydrogen ions are translocated across the cytoplasmic membrane), and thus conserves the redox energy in a proton gradient. This subunit may bind ubiquinone. This chain is NADH-quinone oxidoreductase subunit H, found in Chromobacterium violaceum (strain ATCC 12472 / DSM 30191 / JCM 1249 / CCUG 213 / NBRC 12614 / NCIMB 9131 / NCTC 9757 / MK).